Here is a 379-residue protein sequence, read N- to C-terminus: Chaperone protein DnaJ (379 aa).

The 66-residue stretch at 5–70 (DYYESLGVAK…QKRAAYDQYG (66 aa)) folds into the J domain. The segment at 134–212 (GVTKEIRIPA…CHGHGRVEKS (79 aa)) adopts a CR-type zinc-finger fold. 8 residues coordinate Zn(2+): cysteine 147, cysteine 150, cysteine 164, cysteine 167, cysteine 186, cysteine 189, cysteine 200, and cysteine 203. CXXCXGXG motif repeat units follow at residues 147-154 (CDVCHGNG), 164-171 (CPTCHGNG), 186-193 (CPHCHGRG), and 200-207 (CIKCHGHG).

The protein belongs to the DnaJ family. As to quaternary structure, homodimer. Requires Zn(2+) as cofactor.

It localises to the cytoplasm. In terms of biological role, participates actively in the response to hyperosmotic and heat shock by preventing the aggregation of stress-denatured proteins and by disaggregating proteins, also in an autonomous, DnaK-independent fashion. Unfolded proteins bind initially to DnaJ; upon interaction with the DnaJ-bound protein, DnaK hydrolyzes its bound ATP, resulting in the formation of a stable complex. GrpE releases ADP from DnaK; ATP binding to DnaK triggers the release of the substrate protein, thus completing the reaction cycle. Several rounds of ATP-dependent interactions between DnaJ, DnaK and GrpE are required for fully efficient folding. Also involved, together with DnaK and GrpE, in the DNA replication of plasmids through activation of initiation proteins. In Pectobacterium atrosepticum (strain SCRI 1043 / ATCC BAA-672) (Erwinia carotovora subsp. atroseptica), this protein is Chaperone protein DnaJ.